The sequence spans 237 residues: MRPSGRTPEQLRPITITRQYTCHAEGSVLVEFGRTKVLCTATVTEGVPRFLKGKGQGWVTAEYGMLPRSTHSRMHREAASGKQGGRTLEIQRLIARSLRAAVDLTKLGENTITVDCDVLQADGGTRTASITGACVALADALNWMLAKGSLKTNPLNFMVAAVSVGIYEGAPVCDLDYDEDSSAETDMNLVMTETGKMIEIQGTAEGEPFSQEELMQLLELGKQGIQQIIQHQRQALA.

Residues R86 and 124–126 (GTR) contribute to the phosphate site.

It belongs to the RNase PH family. As to quaternary structure, homohexameric ring arranged as a trimer of dimers.

It carries out the reaction tRNA(n+1) + phosphate = tRNA(n) + a ribonucleoside 5'-diphosphate. In terms of biological role, phosphorolytic 3'-5' exoribonuclease that plays an important role in tRNA 3'-end maturation. Removes nucleotide residues following the 3'-CCA terminus of tRNAs; can also add nucleotides to the ends of RNA molecules by using nucleoside diphosphates as substrates, but this may not be physiologically important. Probably plays a role in initiation of 16S rRNA degradation (leading to ribosome degradation) during starvation. The polypeptide is Ribonuclease PH (Tolumonas auensis (strain DSM 9187 / NBRC 110442 / TA 4)).